The primary structure comprises 131 residues: Small ribosomal subunit protein uS11 (131 aa).

Belongs to the universal ribosomal protein uS11 family. Part of the 30S ribosomal subunit. Interacts with proteins S7 and S18. Binds to IF-3.

Located on the platform of the 30S subunit, it bridges several disparate RNA helices of the 16S rRNA. Forms part of the Shine-Dalgarno cleft in the 70S ribosome. This is Small ribosomal subunit protein uS11 from Saccharophagus degradans (strain 2-40 / ATCC 43961 / DSM 17024).